Reading from the N-terminus, the 89-residue chain is Toxin To14 (89 aa).

The first 19 residues, 1-19 (MNCLMLIFVVFLLAFGVEC), serve as a signal peptide directing secretion. Positions 21-85 (KDDYPVDTAK…SPTKTSGRCN (65 aa)) constitute an LCN-type CS-alpha/beta domain. 4 disulfides stabilise this stretch: C33-C84, C37-C60, C46-C67, and C50-C69.

As to expression, expressed by the venom gland.

Its subcellular location is the secreted. Functionally, inhibits voltage-gated sodium channels (Nav). The chain is Toxin To14 from Tityus obscurus (Amazonian scorpion).